Consider the following 623-residue polypeptide: Mu-like prophage FluMu defective tail fiber protein (623 aa).

To phage Mu protein S.

The chain is Mu-like prophage FluMu defective tail fiber protein from Haemophilus influenzae (strain ATCC 51907 / DSM 11121 / KW20 / Rd).